A 338-amino-acid chain; its full sequence is 4-hydroxy-2-oxovalerate aldolase (338 aa).

A Pyruvate carboxyltransferase domain is found at 4 to 254; that stretch reads PRLTDTTLRD…NPGLDVLALM (251 aa). Residue 12 to 13 coordinates substrate; sequence RD. Mn(2+) is bound at residue aspartate 13. The active-site Proton acceptor is the histidine 16. 2 residues coordinate substrate: serine 166 and histidine 193. Positions 193 and 195 each coordinate Mn(2+). Tyrosine 284 serves as a coordination point for substrate.

The protein belongs to the 4-hydroxy-2-oxovalerate aldolase family.

The enzyme catalyses (S)-4-hydroxy-2-oxopentanoate = acetaldehyde + pyruvate. The polypeptide is 4-hydroxy-2-oxovalerate aldolase (Roseiflexus sp. (strain RS-1)).